The sequence spans 560 residues: Nucleoprotein (560 aa).

The binding site for the cap structure m7GTP stretch occupies residues 54-236 (LRKAKRSDAD…ITRDESAVNI (183 aa)). Positions 323–332 (GRSWDNTSVD) are enriched in polar residues. The tract at residues 323-349 (GRSWDNTSVDLNPKPDPGPRAPEKNGQ) is disordered. Positions 380 and 382 each coordinate Mn(2+). Positions 390, 497, 500, and 521 each coordinate Zn(2+). Mn(2+) is bound at residue D525.

Belongs to the arenaviridae nucleocapsid protein family. As to quaternary structure, homomultimerizes to form the nucleocapsid. Binds to viral genomic RNA. Interacts with glycoprotein G2. Interacts with protein Z; this interaction probably directs the encapsidated genome to budding sites. Interacts with protein L; this interaction does not interfere with Z-L interaction. Interacts with host IKBKE (via Protein kinase domain); the interaction inhibits IKBKE kinase activity.

The protein resides in the virion. It is found in the host cytoplasm. Its function is as follows. Encapsidates the genome, protecting it from nucleases. The encapsidated genomic RNA is termed the nucleocapsid (NC). Serves as template for viral transcription and replication. The increased presence of protein N in host cell does not seem to trigger the switch from transcription to replication as observed in other negative strain RNA viruses. Through the interaction with host IKBKE, strongly inhibits the phosphorylation and nuclear translocation of host IRF3, a protein involved in interferon activation pathway, leading to the inhibition of interferon-beta and IRF3-dependent promoters activation. Also encodes a functional 3'-5' exoribonuclease that degrades preferentially dsRNA substrates and thereby participates in the suppression of interferon induction. In Cupixi mammarenavirus (isolate Rat/Brasil/BeAn 119303/1970) (CPXV), this protein is Nucleoprotein.